The chain runs to 258 residues: Large ribosomal subunit protein uL3 (258 aa).

This sequence belongs to the universal ribosomal protein uL3 family. As to quaternary structure, part of the 50S ribosomal subunit. Forms a cluster with proteins L14 and L19.

Its function is as follows. One of the primary rRNA binding proteins, it binds directly near the 3'-end of the 23S rRNA, where it nucleates assembly of the 50S subunit. This chain is Large ribosomal subunit protein uL3, found in Spiroplasma kunkelii.